The sequence spans 466 residues: IQ domain-containing protein C (466 aa).

Residues 6–35 enclose the IQ domain; it reads LVRKVSALQACVRGFLVRRQFQSLRAEYEA. Disordered stretches follow at residues 105–157, 214–233, 238–310, and 394–466; these read KSGE…PHSQ, EQACERDQSQPSAPLEDQSY, TGEL…QTFG, and VLDL…EPPG. Residues 132–153 are compositionally biased toward basic and acidic residues; sequence PSQEKTRDTTRMENPEATDQRL. A compositionally biased stretch (polar residues) spans 282–293; the sequence is GPPSSIPSNSQA. Residues 297 to 306 show a composition bias toward basic and acidic residues; that stretch reads RLTKGPDDGR. Ser438 bears the Phosphoserine mark.

This is IQ domain-containing protein C (IQCC) from Homo sapiens (Human).